A 478-amino-acid chain; its full sequence is tRNA modification GTPase MnmE (478 aa).

Arg25, Glu82, and Lys135 together coordinate (6S)-5-formyl-5,6,7,8-tetrahydrofolate. In terms of domain architecture, TrmE-type G spans 231–400 (GIKVVIAGQP…LRQRLLQVVG (170 aa)). Position 241 (Asn241) interacts with K(+). GTP-binding positions include 241 to 246 (NAGKSS), 260 to 266 (TPIAGTT), and 285 to 288 (DTAG). Ser245 serves as a coordination point for Mg(2+). Positions 260, 262, and 265 each coordinate K(+). A Mg(2+)-binding site is contributed by Thr266. A (6S)-5-formyl-5,6,7,8-tetrahydrofolate-binding site is contributed by Lys478.

Belongs to the TRAFAC class TrmE-Era-EngA-EngB-Septin-like GTPase superfamily. TrmE GTPase family. Homodimer. Heterotetramer of two MnmE and two MnmG subunits. K(+) serves as cofactor.

It is found in the cytoplasm. In terms of biological role, exhibits a very high intrinsic GTPase hydrolysis rate. Involved in the addition of a carboxymethylaminomethyl (cmnm) group at the wobble position (U34) of certain tRNAs, forming tRNA-cmnm(5)s(2)U34. The protein is tRNA modification GTPase MnmE of Polaromonas sp. (strain JS666 / ATCC BAA-500).